Consider the following 75-residue polypeptide: Protein Tlp homolog (75 aa).

The disordered stretch occupies residues 48–75 (KNQRRREALDGMREEIKDEARDKKNGYM).

The protein belongs to the Tlp family.

The protein is Protein Tlp homolog of Clostridium botulinum (strain 657 / Type Ba4).